Reading from the N-terminus, the 291-residue chain is Acetyl-coenzyme A carboxylase carboxyl transferase subunit beta (291 aa).

Positions 1-23 are disordered; it reads MSWLSKLMPSGIRTDNTPSKKRS. Residues 28–291 enclose the CoA carboxyltransferase N-terminal domain; the sequence is LWEKCSNCGS…LGRQPAPEVA (264 aa). 4 residues coordinate Zn(2+): cysteine 32, cysteine 35, cysteine 51, and cysteine 54. A C4-type zinc finger spans residues 32–54; that stretch reads CSNCGSALYRPELEENLEVCPKC.

Belongs to the AccD/PCCB family. In terms of assembly, acetyl-CoA carboxylase is a heterohexamer composed of biotin carboxyl carrier protein (AccB), biotin carboxylase (AccC) and two subunits each of ACCase subunit alpha (AccA) and ACCase subunit beta (AccD). The cofactor is Zn(2+).

It localises to the cytoplasm. It catalyses the reaction N(6)-carboxybiotinyl-L-lysyl-[protein] + acetyl-CoA = N(6)-biotinyl-L-lysyl-[protein] + malonyl-CoA. Its pathway is lipid metabolism; malonyl-CoA biosynthesis; malonyl-CoA from acetyl-CoA: step 1/1. Functionally, component of the acetyl coenzyme A carboxylase (ACC) complex. Biotin carboxylase (BC) catalyzes the carboxylation of biotin on its carrier protein (BCCP) and then the CO(2) group is transferred by the transcarboxylase to acetyl-CoA to form malonyl-CoA. The sequence is that of Acetyl-coenzyme A carboxylase carboxyl transferase subunit beta from Stenotrophomonas maltophilia (strain K279a).